A 220-amino-acid chain; its full sequence is Ribonuclease HII (220 aa).

The RNase H type-2 domain occupies 32–220 (KHIVGIDEAG…FAPIKGRYSV (189 aa)). Positions 38, 39, and 130 each coordinate a divalent metal cation.

This sequence belongs to the RNase HII family. The cofactor is Mn(2+). Mg(2+) is required as a cofactor.

It is found in the cytoplasm. The catalysed reaction is Endonucleolytic cleavage to 5'-phosphomonoester.. Its function is as follows. Endonuclease that specifically degrades the RNA of RNA-DNA hybrids. The sequence is that of Ribonuclease HII from Brucella anthropi (strain ATCC 49188 / DSM 6882 / CCUG 24695 / JCM 21032 / LMG 3331 / NBRC 15819 / NCTC 12168 / Alc 37) (Ochrobactrum anthropi).